We begin with the raw amino-acid sequence, 732 residues long: Polyribonucleotide nucleotidyltransferase (732 aa).

Mg(2+) contacts are provided by D515 and D521. A KH domain is found at 581-641 (PKLELFNVDP…KNVDAAKDYI (61 aa)). Residues 672–731 (GDEFTGSVKSVVDFGVFIELKDGVDGLLHISKIKSPLNVGDQVKVCVSEQKGNKISLSLV) form the S1 motif domain.

The protein belongs to the polyribonucleotide nucleotidyltransferase family. It depends on Mg(2+) as a cofactor.

It localises to the cytoplasm. The catalysed reaction is RNA(n+1) + phosphate = RNA(n) + a ribonucleoside 5'-diphosphate. Its function is as follows. Involved in mRNA degradation. Catalyzes the phosphorolysis of single-stranded polyribonucleotides processively in the 3'- to 5'-direction. This is Polyribonucleotide nucleotidyltransferase from Campylobacter concisus (strain 13826).